Consider the following 622-residue polypeptide: Neuronal acetylcholine receptor subunit alpha-4 (622 aa).

Positions 1 to 23 (MGFLVSKGNLLLLLCASIFPAFG) are cleaved as a signal peptide. At 24 to 237 (HVETRAHAEE…ITYSFIIRRL (214 aa)) the chain is on the extracellular side. Asn-52 carries N-linked (GlcNAc...) asparagine glycosylation. Ca(2+) contacts are provided by Val-71 and Glu-73. Asn-102 is a glycosylation site (N-linked (GlcNAc...) asparagine). 2 disulfides stabilise this stretch: Cys-156/Cys-170 and Cys-220/Cys-221. A helical membrane pass occupies residues 238 to 262 (PLFYTINLIIPCLLISCLTVLVFYL). Cys-266 carries the S-palmitoyl cysteine lipid modification. The next 2 helical transmembrane spans lie at 270–288 (ITLC…LLIT) and 304–325 (YLLF…VLNV). Over 326–595 (HHRSPRTHTM…WKYVAMVIDR (270 aa)) the chain is Cytoplasmic. 2 disordered regions span residues 380–477 (WSET…TEEG) and 497–516 (QTNG…LNEE). A compositionally biased stretch (low complexity) spans 390–407 (TTSSSPSPQSNEPSPTSS). Composition is skewed to polar residues over residues 450–472 (SDTQ…YSPN) and 497–508 (QTNGHSSASPAS). Residues 596–614 (IFLWMFIIVCLLGTVGLFL) traverse the membrane as a helical segment.

It belongs to the ligand-gated ion channel (TC 1.A.9) family. Acetylcholine receptor (TC 1.A.9.1) subfamily. Alpha-4/CHRNA4 sub-subfamily. Neuronal AChR is composed of two different types of subunits: alpha and beta. CHRNA4 forms heteropentameric neuronal acetylcholine receptors with CHRNB2 and CHRNB4, as well as CHRNA5 and CHRNB3 as accesory subunits. Found in two major stoichiometric forms, LS (low agonist sensitivity): (CHRNA4)3:(CHRNB2)2 and HS (high agonist sensitivity): (CHRNA4)2:(CHRNB2)3, the two stoichiometric forms differ in their unitary conductance, calcium permeability, ACh sensitivity and potentiation by divalent cation. Cells produce predominantly an (CHRNA4)3:(CHRNB2)2 nAChR. The (CHRNA4)2:(CHRNB2)3 expression is selectively up-regulated by nicotine and has lower single channel conductance and calcium permeability. In the striatum, also forms CHRNA4:CHRNA6:CHRNB2 complexes. Also found in the stoichiometric form: (CHRNA4:CHRNB2)2:CHRNB3.

It localises to the synaptic cell membrane. Its subcellular location is the cell membrane. The catalysed reaction is Ca(2+)(in) = Ca(2+)(out). It carries out the reaction K(+)(in) = K(+)(out). It catalyses the reaction Na(+)(in) = Na(+)(out). Activated by a myriad of ligands such as acetylcholine, cytisine, nicotine, choline and epibatidine. Channel potentiation by calcium is stoichiometry-selective, CHRNA4:CHRNB2 nACh receptor is achieved by calcium association with topographically distinct sites framed by anionic residues within the CHRNA4 subunit and between the CHRNA4 and CHRNB2 subunits. nAChR activity is inhibited by the antagonist alpha-conotoxins BuIA, PnIA, GID and MII, small disulfide-constrained peptides from cone snails. In terms of biological role, component of neuronal acetylcholine receptors (nAChRs) that function as pentameric, ligand-gated cation channels with high calcium permeability among other activities. nAChRs are excitatory neurotrasnmitter receptors formed by a collection of nAChR subunits known to mediate synaptic transmission in the nervous system and the neuromuscular junction. Each nAchR subunit confers differential attributes to channel properties, including activation, deactivation and desensitization kinetics, pH sensitivity, cation permeability, and binding to allosteric modulators. CHRNA4 forms heteropentameric neuronal acetylcholine receptors with CHRNB2 and CHRNB4, as well as CHRNA5 and CHRNB3 as accesory subunits. Is the most abundant nAChR subtype expressed in the central nervous system. Found in two major stoichiometric forms,(CHRNA4)3:(CHRNB2)2 and (CHRNA4)2:(CHRNB2)3, the two stoichiometric forms differ in their unitary conductance, calcium permeability, ACh sensitivity and potentiation by divalent cation. Involved in the modulation of calcium-dependent signaling pathways, influences the release of neurotransmitters, including dopamine, glutamate and GABA. This is Neuronal acetylcholine receptor subunit alpha-4 (CHRNA4) from Gallus gallus (Chicken).